The primary structure comprises 507 residues: Glycerol kinase (507 aa).

Thr13 lines the ADP pocket. Residues Thr13, Thr14, and Ser15 each coordinate ATP. Thr13 provides a ligand contact to sn-glycerol 3-phosphate. Arg17 contacts ADP. Residues Arg83, Glu84, Tyr135, and Asp245 each contribute to the sn-glycerol 3-phosphate site. Glycerol is bound by residues Arg83, Glu84, Tyr135, Asp245, and Gln246. ADP is bound by residues Thr267 and Gly310. ATP is bound by residues Thr267, Gly310, Gln314, and Gly411. Residues Gly411 and Asn415 each coordinate ADP.

It belongs to the FGGY kinase family.

It carries out the reaction glycerol + ATP = sn-glycerol 3-phosphate + ADP + H(+). Its pathway is polyol metabolism; glycerol degradation via glycerol kinase pathway; sn-glycerol 3-phosphate from glycerol: step 1/1. Inhibited by fructose 1,6-bisphosphate (FBP). Its function is as follows. Key enzyme in the regulation of glycerol uptake and metabolism. Catalyzes the phosphorylation of glycerol to yield sn-glycerol 3-phosphate. The chain is Glycerol kinase from Halorhodospira halophila (strain DSM 244 / SL1) (Ectothiorhodospira halophila (strain DSM 244 / SL1)).